The primary structure comprises 283 residues: MPELPEVETVRRGLAPVLEGARIAQAAVNRPDLRWPFPDNMAQRLTGATVTALRRRSKYILADLDTGETLLIHLGMSGRMQISGDVIGSFHHTHPAAAKHDHVVLDTDAGARITFNDARRFGAMDLMDTATQDQHWLLRDLGPEPLGNAFNEAHLVAAFKGKRSPVKTALLDQRIVSGLGNIYVCEALWRAGISPLRQAGKIAAVRVATLVPIIRDVLTEAIEAGGSSLRDHRQATGELGYFQHTFRVYGREGQRCQTPDCAEKILRKVQSGRSSFYCPACQR.

Proline 2 acts as the Schiff-base intermediate with DNA in catalysis. Glutamate 3 (proton donor) is an active-site residue. Catalysis depends on lysine 58, which acts as the Proton donor; for beta-elimination activity. Positions 100, 119, and 162 each coordinate DNA. The FPG-type zinc-finger motif lies at 247-283 (RVYGREGQRCQTPDCAEKILRKVQSGRSSFYCPACQR). The Proton donor; for delta-elimination activity role is filled by arginine 273.

This sequence belongs to the FPG family. In terms of assembly, monomer. Requires Zn(2+) as cofactor.

It catalyses the reaction Hydrolysis of DNA containing ring-opened 7-methylguanine residues, releasing 2,6-diamino-4-hydroxy-5-(N-methyl)formamidopyrimidine.. The enzyme catalyses 2'-deoxyribonucleotide-(2'-deoxyribose 5'-phosphate)-2'-deoxyribonucleotide-DNA = a 3'-end 2'-deoxyribonucleotide-(2,3-dehydro-2,3-deoxyribose 5'-phosphate)-DNA + a 5'-end 5'-phospho-2'-deoxyribonucleoside-DNA + H(+). In terms of biological role, involved in base excision repair of DNA damaged by oxidation or by mutagenic agents. Acts as a DNA glycosylase that recognizes and removes damaged bases. Has a preference for oxidized purines, such as 7,8-dihydro-8-oxoguanine (8-oxoG). Has AP (apurinic/apyrimidinic) lyase activity and introduces nicks in the DNA strand. Cleaves the DNA backbone by beta-delta elimination to generate a single-strand break at the site of the removed base with both 3'- and 5'-phosphates. The chain is Formamidopyrimidine-DNA glycosylase from Jannaschia sp. (strain CCS1).